The sequence spans 170 residues: Neurotensin/neuromedin N (170 aa).

The first 23 residues, 1-23 (MMAGMKIQLVCMILLAFSSWSLC), serve as a signal peptide directing secretion.

Belongs to the neurotensin family. As to quaternary structure, interacts with NTSR1. Interacts with SORT1. Interacts with SORL1. Post-translationally, neurotensin is cleaved and degraded by Angiotensin-converting enzyme (ACE) and neprilysin (MME).

Its subcellular location is the secreted. It is found in the cytoplasmic vesicle. It localises to the secretory vesicle. In terms of biological role, neurotensin may play an endocrine or paracrine role in the regulation of fat metabolism. It causes contraction of smooth muscle. This is Neurotensin/neuromedin N (NTS) from Canis lupus familiaris (Dog).